The primary structure comprises 238 residues: Ribonuclease PH (238 aa).

Residues R86 and 124 to 126 each bind phosphate; that span reads GTR.

Belongs to the RNase PH family. Homohexameric ring arranged as a trimer of dimers.

The catalysed reaction is tRNA(n+1) + phosphate = tRNA(n) + a ribonucleoside 5'-diphosphate. In terms of biological role, phosphorolytic 3'-5' exoribonuclease that plays an important role in tRNA 3'-end maturation. Removes nucleotide residues following the 3'-CCA terminus of tRNAs; can also add nucleotides to the ends of RNA molecules by using nucleoside diphosphates as substrates, but this may not be physiologically important. Probably plays a role in initiation of 16S rRNA degradation (leading to ribosome degradation) during starvation. This is Ribonuclease PH from Geotalea uraniireducens (strain Rf4) (Geobacter uraniireducens).